Here is a 216-residue protein sequence, read N- to C-terminus: MSAKLISVTKPVVEGVNTAEELIAYAARVSNPENQINNKTASGLLKYCIRHKHWSIFETAFMTLELKTSRGIAAQVLRHRSFHFQEFSQRYASVMETPPPHQARFQDHKNRQNSLDTVPEDDQTWWATEQEKLYAQSMELYNKALEKGIAKECARFILPLSTPTTIYMSGTIRDWIHYIELRTSNGTQREHIDLANACKEIFIKEFPSIAKALDWV.

Residues 1–216 (MSAKLISVTK…PSIAKALDWV (216 aa)) enclose the ThyX domain. FAD is bound by residues S55, 78-80 (RHR), and E86. DUMP contacts are provided by residues 75–78 (QVLR), 86–90 (EFSQR), and R155. Positions 78–88 (RHRSFHFQEFS) match the ThyX motif motif. Residue H177 coordinates FAD. R182 is a binding site for dUMP. Catalysis depends on R182, which acts as the Involved in ionization of N3 of dUMP, leading to its activation.

Belongs to the thymidylate synthase ThyX family. As to quaternary structure, homotetramer. It depends on FAD as a cofactor.

The catalysed reaction is dUMP + (6R)-5,10-methylene-5,6,7,8-tetrahydrofolate + NADPH + H(+) = dTMP + (6S)-5,6,7,8-tetrahydrofolate + NADP(+). Its pathway is pyrimidine metabolism; dTTP biosynthesis. Catalyzes the reductive methylation of 2'-deoxyuridine-5'-monophosphate (dUMP) to 2'-deoxythymidine-5'-monophosphate (dTMP) while utilizing 5,10-methylenetetrahydrofolate (mTHF) as the methyl donor, and NADPH and FADH(2) as the reductant. The chain is Probable flavin-dependent thymidylate synthase from Paramecium bursaria Chlorella virus 1 (PBCV-1).